Here is a 238-residue protein sequence, read N- to C-terminus: Ribonuclease PH (238 aa).

Residues Arg-86 and 124–126 (GTR) contribute to the phosphate site.

It belongs to the RNase PH family. As to quaternary structure, homohexameric ring arranged as a trimer of dimers.

The catalysed reaction is tRNA(n+1) + phosphate = tRNA(n) + a ribonucleoside 5'-diphosphate. Functionally, phosphorolytic 3'-5' exoribonuclease that plays an important role in tRNA 3'-end maturation. Removes nucleotide residues following the 3'-CCA terminus of tRNAs; can also add nucleotides to the ends of RNA molecules by using nucleoside diphosphates as substrates, but this may not be physiologically important. Probably plays a role in initiation of 16S rRNA degradation (leading to ribosome degradation) during starvation. This chain is Ribonuclease PH, found in Phenylobacterium zucineum (strain HLK1).